The sequence spans 529 residues: BTB/POZ domain-containing protein 6 (529 aa).

A BTB domain is found at 127–197; sequence ADVHFIVGPA…LYSDEIDLEA (71 aa).

In terms of assembly, homodimer and heterodimer. Interacts with cul3 via the BTB domain.

It localises to the cytoplasm. Functionally, adapter protein for the cul3 E3 ubiquitin-protein ligase complex. Involved in late neuronal development and muscle formation. This chain is BTB/POZ domain-containing protein 6 (btbd6), found in Xenopus tropicalis (Western clawed frog).